The chain runs to 90 residues: Small regulatory polypeptide of amino acid response (90 aa).

Residues 1-18 (MGAKAPRGPKVAQWAMET) are Lumenal-facing. Residues 19–39 (AVIGVVVVLFVVTVAITCVLC) traverse the membrane as a helical segment. At 40 to 90 (CFSCDSRAQDPQGGPGRSFTVATFRQEASLFTGPVRHAQPVPSAQDFWTFM) the chain is on the cytoplasmic side.

As to quaternary structure, interacts with components of the lysosomal V-ATPase complex. Interacts with ATP6V0A1. Interacts with ATP6V0A2. Highly expressed in lung, heart and skeletal muscle.

Its subcellular location is the late endosome membrane. The protein resides in the lysosome membrane. In terms of biological role, negative regulator of amino acid sensing and mTORC1, a signaling complex promoting cell growth in response to growth factors, energy levels and amino acids. Negatively regulates mTORC1 activation by inhibiting recruitment of mTORC1 to lysosomes upon stimulation with amino acids: acts by promoting the formation of a tightly bound supercomplex composed of the lysosomal V-ATPase, Ragulator and Rag GTPases, preventing recruitment of mTORC1. Acts as a regulator of muscle regeneration following injury by regulating mTORC1 activation. This Homo sapiens (Human) protein is Small regulatory polypeptide of amino acid response.